The sequence spans 206 residues: Ribonuclease HII (206 aa).

The RNase H type-2 domain maps to 14–206 (ALVCGIDEAG…FRLRQLGEKP (193 aa)). A divalent metal cation contacts are provided by aspartate 20, glutamate 21, and aspartate 117.

It belongs to the RNase HII family. Mn(2+) is required as a cofactor. Requires Mg(2+) as cofactor.

It localises to the cytoplasm. It catalyses the reaction Endonucleolytic cleavage to 5'-phosphomonoester.. Its function is as follows. Endonuclease that specifically degrades the RNA of RNA-DNA hybrids. The sequence is that of Ribonuclease HII from Pelodictyon phaeoclathratiforme (strain DSM 5477 / BU-1).